Here is a 218-residue protein sequence, read N- to C-terminus: Pyridoxine/pyridoxamine 5'-phosphate oxidase (218 aa).

Residues 14 to 17 (RREY) and lysine 72 each bind substrate. Residues 67–72 (RIVLLK), 82–83 (YT), arginine 88, lysine 89, and glutamine 111 each bind FMN. Substrate is bound by residues tyrosine 129, arginine 133, and serine 137. Residues 146 to 147 (QS) and tryptophan 191 contribute to the FMN site. 197–199 (RLH) is a substrate binding site. Position 201 (arginine 201) interacts with FMN.

The protein belongs to the pyridoxamine 5'-phosphate oxidase family. In terms of assembly, homodimer. The cofactor is FMN.

The enzyme catalyses pyridoxamine 5'-phosphate + O2 + H2O = pyridoxal 5'-phosphate + H2O2 + NH4(+). It carries out the reaction pyridoxine 5'-phosphate + O2 = pyridoxal 5'-phosphate + H2O2. The protein operates within cofactor metabolism; pyridoxal 5'-phosphate salvage; pyridoxal 5'-phosphate from pyridoxamine 5'-phosphate: step 1/1. Its pathway is cofactor metabolism; pyridoxal 5'-phosphate salvage; pyridoxal 5'-phosphate from pyridoxine 5'-phosphate: step 1/1. Functionally, catalyzes the oxidation of either pyridoxine 5'-phosphate (PNP) or pyridoxamine 5'-phosphate (PMP) into pyridoxal 5'-phosphate (PLP). The chain is Pyridoxine/pyridoxamine 5'-phosphate oxidase from Citrobacter koseri (strain ATCC BAA-895 / CDC 4225-83 / SGSC4696).